The chain runs to 244 residues: UPF0173 metal-dependent hydrolase Rcas_3617 (244 aa).

This sequence belongs to the UPF0173 family.

The protein is UPF0173 metal-dependent hydrolase Rcas_3617 of Roseiflexus castenholzii (strain DSM 13941 / HLO8).